The chain runs to 156 residues: Ribosomal RNA large subunit methyltransferase H (156 aa).

S-adenosyl-L-methionine-binding positions include Leu-73, Gly-104, and 123–128 (LSALTL).

The protein belongs to the RNA methyltransferase RlmH family. In terms of assembly, homodimer.

Its subcellular location is the cytoplasm. It catalyses the reaction pseudouridine(1915) in 23S rRNA + S-adenosyl-L-methionine = N(3)-methylpseudouridine(1915) in 23S rRNA + S-adenosyl-L-homocysteine + H(+). Its function is as follows. Specifically methylates the pseudouridine at position 1915 (m3Psi1915) in 23S rRNA. This Shewanella baltica (strain OS223) protein is Ribosomal RNA large subunit methyltransferase H.